A 70-amino-acid polypeptide reads, in one-letter code: Flexible pilin (70 aa).

Positions 1–24 (MPNFFRNGCIALVGSVAAMGAAHA) are cleaved as a signal peptide.

As to quaternary structure, homomer.

The protein resides in the fimbrium. In terms of biological role, fimbriae (also called pili) are polar filaments radiating from the surface of the bacterium to a length of 0.5-1.5 micrometers and numbering 100-300 per cell. They enable bacteria to colonize the epithelium of specific host organs. Flexible pili possess hemagglutinating function. The polypeptide is Flexible pilin (aerA) (Aeromonas hydrophila).